Consider the following 354-residue polypeptide: Uroporphyrinogen decarboxylase (354 aa).

Residues 27-31, Asp-77, Tyr-154, Thr-209, and His-327 each bind substrate; that span reads RQAGR.

Belongs to the uroporphyrinogen decarboxylase family. As to quaternary structure, homodimer.

The protein localises to the cytoplasm. The catalysed reaction is uroporphyrinogen III + 4 H(+) = coproporphyrinogen III + 4 CO2. Its pathway is porphyrin-containing compound metabolism; protoporphyrin-IX biosynthesis; coproporphyrinogen-III from 5-aminolevulinate: step 4/4. Catalyzes the decarboxylation of four acetate groups of uroporphyrinogen-III to yield coproporphyrinogen-III. The protein is Uroporphyrinogen decarboxylase of Histophilus somni (strain 2336) (Haemophilus somnus).